A 116-amino-acid chain; its full sequence is Large ribosomal subunit protein uL18 (116 aa).

This sequence belongs to the universal ribosomal protein uL18 family. Part of the 50S ribosomal subunit; part of the 5S rRNA/L5/L18/L25 subcomplex. Contacts the 5S and 23S rRNAs.

In terms of biological role, this is one of the proteins that bind and probably mediate the attachment of the 5S RNA into the large ribosomal subunit, where it forms part of the central protuberance. The chain is Large ribosomal subunit protein uL18 from Saccharophagus degradans (strain 2-40 / ATCC 43961 / DSM 17024).